Consider the following 556-residue polypeptide: Formate--tetrahydrofolate ligase (556 aa).

65–72 contributes to the ATP binding site; it reads TPAGEGKT.

Belongs to the formate--tetrahydrofolate ligase family.

The enzyme catalyses (6S)-5,6,7,8-tetrahydrofolate + formate + ATP = (6R)-10-formyltetrahydrofolate + ADP + phosphate. It functions in the pathway one-carbon metabolism; tetrahydrofolate interconversion. This Maricaulis maris (strain MCS10) (Caulobacter maris) protein is Formate--tetrahydrofolate ligase.